A 581-amino-acid chain; its full sequence is Suppressor of cytokine signaling 7 (581 aa).

Disordered stretches follow at residues Met-1–Pro-23, Pro-89–Glu-109, Glu-123–Ser-272, and Gln-297–Leu-316. Composition is skewed to pro residues over residues Pro-89–Ala-99, Pro-154–Phe-164, and Gln-187–Leu-198. A mediates interaction with SORBS3 region spans residues Ala-124–Arg-494. Over residues Gly-208–Arg-219 the composition is skewed to basic residues. Residues Pro-303 to Arg-313 are compositionally biased toward pro residues. Residues Trp-400–Val-509 form the SH2 domain. The SOCS box domain occupies Gln-504–Tyr-554.

Substrate-recognition component of the ECS(SOCS7) complex, composed of SOCS7, CUL5, ELOB, ELOC and RNF7/RBX2. Interacts, via the third proline-rich region, with the second SH3 domain of the adapter protein NCK1. Also interacts with GRB2, INSR, PLCG1, SORBS3/vinexin, and phosphorylated STAT3 and STAT5. Interacts with SEPT6. Interacts with phosphorylated IRS4 and PIK3R1. Expressed in brain and leukocytes. Also in fetal lung fibroblasts and fetal brain.

The protein resides in the cytoplasm. It localises to the nucleus. The protein localises to the cell membrane. The protein operates within protein modification; protein ubiquitination. Its function is as follows. Substrate-recognition component of a cullin-5-RING E3 ubiquitin-protein ligase complex (ECS complex, also named CRL5 complex), which mediates the ubiquitination and subsequent proteasomal degradation of target proteins, such as DAB1 and IRS1. Specifically recognizes and binds phosphorylated proteins via its SH2 domain, promoting their ubiquitination. The ECS(SOCS7) complex acts as a key regulator of reelin signaling by mediating ubiquitination and degradation of phosphorylated DAB1 in the cortical plate of the developing cerebral cortex, thereby regulating neuron positioning during cortex development. Functions in insulin signaling and glucose homeostasis through IRS1 ubiquitination and subsequent proteasomal degradation. Also inhibits prolactin, growth hormone and leptin signaling by preventing STAT3 and STAT5 activation, sequestering them in the cytoplasm and reducing their binding to DNA. The chain is Suppressor of cytokine signaling 7 from Homo sapiens (Human).